We begin with the raw amino-acid sequence, 160 residues long: Cyclic pyranopterin monophosphate synthase (160 aa).

Substrate is bound by residues 73-75 and 110-111; these read LCH and ME. Asp125 is a catalytic residue.

The protein belongs to the MoaC family. In terms of assembly, homohexamer; trimer of dimers.

The catalysed reaction is (8S)-3',8-cyclo-7,8-dihydroguanosine 5'-triphosphate = cyclic pyranopterin phosphate + diphosphate. It functions in the pathway cofactor biosynthesis; molybdopterin biosynthesis. Catalyzes the conversion of (8S)-3',8-cyclo-7,8-dihydroguanosine 5'-triphosphate to cyclic pyranopterin monophosphate (cPMP). In Pseudomonas aeruginosa (strain LESB58), this protein is Cyclic pyranopterin monophosphate synthase.